The chain runs to 317 residues: Melanocyte-stimulating hormone receptor (317 aa).

Residues 1-28 (MPMQGAQGRLRGSLNATPPTTPHSGLAG) are disordered. Topologically, residues 1 to 37 (MPMQGAQGRLRGSLNATPPTTPHSGLAGNQTGPWCLE) are extracellular. An N-linked (GlcNAc...) asparagine glycan is attached at Asn-29. A helical membrane pass occupies residues 38–63 (VSIPDELFLSLGLVSLVENMLVVAAI). Over 64-72 (AKNRNLHSP) the chain is Cytoplasmic. Residues 73 to 93 (MYYFICCLAVSDLLVSVSNVL) form a helical membrane-spanning segment. The Extracellular portion of the chain corresponds to 94–118 (ETAVMLLLEAGVLAAWAGVVQQLDN). Residues 119–140 (AIDVFICGSMVSSLCFLGAIAV) form a helical membrane-spanning segment. At 141 to 163 (DRYITIFYALRYHSIVTLPRARW) the chain is on the cytoplasmic side. A helical transmembrane segment spans residues 164-183 (AIATIWAASVVCSTLFIAYY). Over 184–191 (DCTAVLLC) the chain is Extracellular. A helical transmembrane segment spans residues 192–211 (LVSFFLALVVLMAVLYMHML). The Cytoplasmic portion of the chain corresponds to 212 to 240 (ARACLHARSIARLHKRWRPVHQGLGLKGA). Residues 241 to 266 (ATLSILLGSFFLCWGPFFLHLTLIVL) traverse the membrane as a helical segment. Residues 267–279 (CPQHPTCSCVFKN) are Extracellular-facing. A helical membrane pass occupies residues 280 to 300 (FKLFLTLIICNSIVDPLIYAF). Topologically, residues 301 to 317 (RSQELRKTLKEVLLCSW) are cytoplasmic. A lipid anchor (S-palmitoyl cysteine) is attached at Cys-315.

This sequence belongs to the G-protein coupled receptor 1 family. As to quaternary structure, interacts with MGRN1, but does not undergo MGRN1-mediated ubiquitination; this interaction competes with GNAS-binding and thus inhibits agonist-induced cAMP production. Interacts with OPN3; the interaction results in a decrease in MC1R-mediated cAMP signaling and ultimately a decrease in melanin production in melanocytes.

The protein localises to the cell membrane. Functionally, receptor for MSH (alpha, beta and gamma) and ACTH. The activity of this receptor is mediated by G proteins which activate adenylate cyclase. Mediates melanogenesis, the production of eumelanin (black/brown) and phaeomelanin (red/yellow), via regulation of cAMP signaling in melanocytes. In Mammuthus primigenius (Siberian woolly mammoth), this protein is Melanocyte-stimulating hormone receptor (MC1R).